A 172-amino-acid chain; its full sequence is R-phycocyanin-1 beta chain (172 aa).

The residue at position 72 (Asn72) is an N4-methylasparagine. Cys82 lines the (2R,3E)-phycocyanobilin pocket. Cys153 is a (2R,3E)-phycoerythrobilin binding site.

The protein belongs to the phycobiliprotein family. Heterodimer of an alpha and a beta chain. Dimers further assemble into trimers and the trimers into hexamers. The basic functional unit of phycobiliproteins is a ring-shaped hexamer formed from two back-to-back trimers contacting via the alpha chain subunits. The trimers are composed of alpha/beta subunit heterodimers arranged around a three-fold axis of symmetry. The phycoerythrins also contain a gamma subunit which is located in the center of the hexamer. Post-translationally, contains two covalently linked bilin chromophores.

The protein resides in the plastid. It is found in the chloroplast thylakoid membrane. Functionally, light-harvesting photosynthetic bile pigment-protein from the phycobiliprotein complex (phycobilisome, PBS). Phycocyanin is the major phycobiliprotein in the PBS rod. The chain is R-phycocyanin-1 beta chain (rpcB) from Porphyridium purpureum (Red alga).